A 63-amino-acid chain; its full sequence is Iota-crystallin (63 aa).

This sequence belongs to the calycin superfamily. Fatty-acid binding protein (FABP) family.

Binds vitamin A2 in the eye lens and thus functions as a UV filter. Intracellular transport of retinol. The chain is Iota-crystallin (CRBPI) from Gonatodes vittatus (Wiegmann's striped gecko).